A 701-amino-acid chain; its full sequence is Elongation factor G (701 aa).

The tr-type G domain maps to 8–286; sequence DRVRNIGIIA…AVVLLLPSPL (279 aa). GTP is bound by residues 17-24, 85-89, and 139-142; these read AHIDAGKT, DTPGH, and NKMD.

Belongs to the TRAFAC class translation factor GTPase superfamily. Classic translation factor GTPase family. EF-G/EF-2 subfamily.

It is found in the cytoplasm. In terms of biological role, catalyzes the GTP-dependent ribosomal translocation step during translation elongation. During this step, the ribosome changes from the pre-translocational (PRE) to the post-translocational (POST) state as the newly formed A-site-bound peptidyl-tRNA and P-site-bound deacylated tRNA move to the P and E sites, respectively. Catalyzes the coordinated movement of the two tRNA molecules, the mRNA and conformational changes in the ribosome. In Herpetosiphon aurantiacus (strain ATCC 23779 / DSM 785 / 114-95), this protein is Elongation factor G.